Reading from the N-terminus, the 264-residue chain is ATP synthase subunit b 1 (264 aa).

The chain crosses the membrane as a helical span at residues Leu-2–Leu-22. Residues Ala-240–Asp-264 are disordered. Residues Glu-255 to Asp-264 are compositionally biased toward basic and acidic residues.

This sequence belongs to the ATPase B chain family. F-type ATPases have 2 components, F(1) - the catalytic core - and F(0) - the membrane proton channel. F(1) has five subunits: alpha(3), beta(3), gamma(1), delta(1), epsilon(1). F(0) has four main subunits: a(1), b(2) and c(10-14). The alpha and beta chains form an alternating ring which encloses part of the gamma chain. F(1) is attached to F(0) by a central stalk formed by the gamma and epsilon chains, while a peripheral stalk is formed by the delta and b chains.

It localises to the cell inner membrane. F(1)F(0) ATP synthase produces ATP from ADP in the presence of a proton or sodium gradient. F-type ATPases consist of two structural domains, F(1) containing the extramembraneous catalytic core and F(0) containing the membrane proton channel, linked together by a central stalk and a peripheral stalk. During catalysis, ATP synthesis in the catalytic domain of F(1) is coupled via a rotary mechanism of the central stalk subunits to proton translocation. In terms of biological role, component of the F(0) channel, it forms part of the peripheral stalk, linking F(1) to F(0). This is ATP synthase subunit b 1 from Chlorobium luteolum (strain DSM 273 / BCRC 81028 / 2530) (Pelodictyon luteolum).